Reading from the N-terminus, the 364-residue chain is 4-hydroxy-3-methylbut-2-en-1-yl diphosphate synthase (flavodoxin) (364 aa).

[4Fe-4S] cluster-binding residues include Cys268, Cys271, Cys303, and Glu310.

It belongs to the IspG family. [4Fe-4S] cluster is required as a cofactor.

The catalysed reaction is (2E)-4-hydroxy-3-methylbut-2-enyl diphosphate + oxidized [flavodoxin] + H2O + 2 H(+) = 2-C-methyl-D-erythritol 2,4-cyclic diphosphate + reduced [flavodoxin]. It participates in isoprenoid biosynthesis; isopentenyl diphosphate biosynthesis via DXP pathway; isopentenyl diphosphate from 1-deoxy-D-xylulose 5-phosphate: step 5/6. In terms of biological role, converts 2C-methyl-D-erythritol 2,4-cyclodiphosphate (ME-2,4cPP) into 1-hydroxy-2-methyl-2-(E)-butenyl 4-diphosphate. The protein is 4-hydroxy-3-methylbut-2-en-1-yl diphosphate synthase (flavodoxin) of Desulfotalea psychrophila (strain LSv54 / DSM 12343).